We begin with the raw amino-acid sequence, 838 residues long: Leucine--tRNA ligase (838 aa).

Positions 38–48 (PYPSGKAHVGH) match the 'HIGH' region motif. The 'KMSKS' region motif lies at 608–612 (KMSKS). Position 611 (K611) interacts with ATP.

It belongs to the class-I aminoacyl-tRNA synthetase family.

The protein resides in the cytoplasm. The enzyme catalyses tRNA(Leu) + L-leucine + ATP = L-leucyl-tRNA(Leu) + AMP + diphosphate. The polypeptide is Leucine--tRNA ligase (Orientia tsutsugamushi (strain Boryong) (Rickettsia tsutsugamushi)).